Consider the following 244-residue polypeptide: 7-cyano-7-deazaguanine synthase (244 aa).

17–27 (FSGGQDSTTCL) is a binding site for ATP. The Zn(2+) site is built by cysteine 205, cysteine 220, cysteine 223, and cysteine 226.

The protein belongs to the QueC family. Zn(2+) is required as a cofactor.

It catalyses the reaction 7-carboxy-7-deazaguanine + NH4(+) + ATP = 7-cyano-7-deazaguanine + ADP + phosphate + H2O + H(+). It participates in purine metabolism; 7-cyano-7-deazaguanine biosynthesis. In terms of biological role, catalyzes the ATP-dependent conversion of 7-carboxy-7-deazaguanine (CDG) to 7-cyano-7-deazaguanine (preQ(0)). This Bordetella parapertussis (strain 12822 / ATCC BAA-587 / NCTC 13253) protein is 7-cyano-7-deazaguanine synthase.